Consider the following 186-residue polypeptide: Large ribosomal subunit protein uL22 (186 aa).

Residue Ser-158 is modified to Phosphoserine. The disordered stretch occupies residues Lys-159–Glu-186. A Phosphothreonine modification is found at Thr-161. Over residues Arg-177–Glu-186 the composition is skewed to basic and acidic residues.

Belongs to the universal ribosomal protein uL22 family.

This is Large ribosomal subunit protein uL22 (RpL17) from Drosophila melanogaster (Fruit fly).